Reading from the N-terminus, the 470-residue chain is Poly(A) polymerase catalytic subunit (470 aa).

Active-site residues include D192 and D194.

The protein belongs to the poxviridae poly(A) polymerase catalytic subunit family. As to quaternary structure, heterodimer of a large (catalytic) subunit and a small (regulatory) subunit.

The catalysed reaction is RNA(n) + ATP = RNA(n)-3'-adenine ribonucleotide + diphosphate. Its function is as follows. Polymerase that creates the 3'-poly(A) tail of mRNA's. The sequence is that of Poly(A) polymerase catalytic subunit (PAPL) from Homo sapiens (Human).